A 230-amino-acid chain; its full sequence is Dephospho-CoA kinase (230 aa).

One can recognise a DPCK domain in the interval 3–225 (IIGLTGGIAT…REGGAICPTP (223 aa)). 11-16 (ATGKST) contributes to the ATP binding site.

This sequence belongs to the CoaE family.

The protein localises to the cytoplasm. It catalyses the reaction 3'-dephospho-CoA + ATP = ADP + CoA + H(+). The protein operates within cofactor biosynthesis; coenzyme A biosynthesis; CoA from (R)-pantothenate: step 5/5. Its function is as follows. Catalyzes the phosphorylation of the 3'-hydroxyl group of dephosphocoenzyme A to form coenzyme A. The polypeptide is Dephospho-CoA kinase (Synechococcus sp. (strain JA-3-3Ab) (Cyanobacteria bacterium Yellowstone A-Prime)).